Here is a 998-residue protein sequence, read N- to C-terminus: Protein Smaug (998 aa).

The segment covering 1–37 (MKYATGTDNAMTSGISGQTNSSNSASNEMQPTTSTPT) has biased composition (polar residues). Disordered regions lie at residues 1 to 45 (MKYA…EATS), 50 to 69 (TATYANGNPNPSANPSQSQP), and 329 to 370 (LCPA…GSSS). Positions 329–338 (LCPASGSRSS) are enriched in low complexity. A phosphoserine mark is found at S564 and S575. Residues 583–763 (EFKPNYIKFH…KDLKFKLSKM (181 aa)) are interaction with cup. One can recognise an SAM domain in the interval 600–654 (GIGLWLKSLRLHKYIELFKNMTYEEMLLITEDFLQSVGVTKGASHKLALCIDKLK). Disordered stretches follow at residues 773–892 (HVKP…MQQM) and 943–977 (NGSNDNLGLERNQQPQQQQQRKLSGGVSSAEQQPK). Composition is skewed to polar residues over residues 801–822 (KSGSNDRINNRKNSNDMLNFSL) and 854–864 (HQPQYKSSSYP). S971 carries the post-translational modification Phosphoserine.

This sequence belongs to the SMAUG family. In terms of assembly, interacts with oskar (osk). Binds to the 3'-UTR of nos. Interacts with cup, which in turn recruits eIF4-E, leading to an indirect interaction between smg and eIF4-E that prevents mRNA translation.

The protein localises to the cytoplasm. Functionally, translation regulator that binds to the 3'-UTR of specific mRNAs such as nanos (nos) and prevent their translation. Prevents translation of unlocalized nos in the bulk cytoplasm via the recruitment of cup. The chain is Protein Smaug from Drosophila sechellia (Fruit fly).